The sequence spans 176 residues: Lipoprotein signal peptidase (176 aa).

Helical transmembrane passes span 26-46 (LWLAFALLVVLLDQFFKIVIV), 57-77 (VTGFFNLVLVYNKGAAFSFLA), 82-102 (WQRWFFTGLGVVVGAFIVWLL), and 111-131 (FCFAVSLILGGAVGNVVDRVI). Catalysis depends on residues Asp137 and Asp155. The helical transmembrane segment at 147-167 (HWPAFNVADCAITVGAVLLIV) threads the bilayer.

Belongs to the peptidase A8 family.

The protein resides in the cell inner membrane. The catalysed reaction is Release of signal peptides from bacterial membrane prolipoproteins. Hydrolyzes -Xaa-Yaa-Zaa-|-(S,diacylglyceryl)Cys-, in which Xaa is hydrophobic (preferably Leu), and Yaa (Ala or Ser) and Zaa (Gly or Ala) have small, neutral side chains.. The protein operates within protein modification; lipoprotein biosynthesis (signal peptide cleavage). Functionally, this protein specifically catalyzes the removal of signal peptides from prolipoproteins. The sequence is that of Lipoprotein signal peptidase from Cupriavidus taiwanensis (strain DSM 17343 / BCRC 17206 / CCUG 44338 / CIP 107171 / LMG 19424 / R1) (Ralstonia taiwanensis (strain LMG 19424)).